The primary structure comprises 257 residues: BTB/POZ domain-containing protein KCTD1 (257 aa).

The tract at residues M1 to L25 is disordered. A phosphoserine mark is found at S9 and S12. Over residues S9 to L25 the composition is skewed to polar residues. Residues A30–D100 form the BTB domain.

Forms homopentamers. Interacts with KCTD15, probably forming heteropentamers depending on its abundance in a cell-type dependent manner. Interacts with TFAP2A, TFAP2B and TFAP2C via the BTB domain. In terms of processing, sumoylated.

It is found in the nucleus. May repress the transcriptional activity of AP-2 family members, including TFAP2A, TFAP2B and TFAP2C to various extent. This Rattus norvegicus (Rat) protein is BTB/POZ domain-containing protein KCTD1 (Kctd1).